Here is a 953-residue protein sequence, read N- to C-terminus: Coatomer subunit beta (953 aa).

Thr2 carries the N-acetylthreonine modification. HEAT repeat units follow at residues 96 to 131, 132 to 168, 240 to 276, 277 to 314, 316 to 353, and 396 to 433; these read HEMI…KEAE, LLEP…NFEH, SERA…SAPT, AIKA…HPAH, RVLQ…SRNV, and DMAA…RFDN. Lys494 is subject to N6-acetyllysine.

Oligomeric complex that consists of at least the alpha, beta, beta', gamma, delta, epsilon and zeta subunits. Interacts (via C-terminus) with HIV-1 Nef; the interaction is direct. Interacts with CAPN8 and PRKCE. Interacts with SCYL1. Interacts with COPG1. Interacts with ARF1 (myristoylated); this interaction is required for binding of COPB1 to Golgi membranes. Interacts (via trunk domain) with ARF1 (via switch I region); the interaction is direct. Interacts with KCNK2 (via N-terminus); this interaction increases the channel-mediated whole cell currents and promotes plasma membrane expression of KCNK2. Interacts with anthrax lethal factor (LF); this interaction may facilitate endosomal vesicle membrane translocation of LF and its release from the lumen of endosomal vesicles to external milieu. Interacts with STX17. Interacts with TMEM115. Interacts with TMEM41B.

The protein resides in the cytoplasm. It localises to the golgi apparatus membrane. Its subcellular location is the cytoplasmic vesicle. The protein localises to the COPI-coated vesicle membrane. It is found in the cell membrane. The protein resides in the endoplasmic reticulum-Golgi intermediate compartment. Its function is as follows. The coatomer is a cytosolic protein complex that binds to dilysine motifs and reversibly associates with Golgi non-clathrin-coated vesicles, which further mediate biosynthetic protein transport from the ER, via the Golgi up to the trans Golgi network. Coatomer complex is required for budding from Golgi membranes, and is essential for the retrograde Golgi-to-ER transport of dilysine-tagged proteins. In mammals, the coatomer can only be recruited by membranes associated to ADP-ribosylation factors (ARFs), which are small GTP-binding proteins; the complex also influences the Golgi structural integrity, as well as the processing, activity, and endocytic recycling of LDL receptors. Plays a functional role in facilitating the transport of kappa-type opioid receptor mRNAs into axons and enhances translation of these proteins. Required for limiting lipid storage in lipid droplets. Involved in lipid homeostasis by regulating the presence of perilipin family members PLIN2 and PLIN3 at the lipid droplet surface and promoting the association of adipocyte surface triglyceride lipase (PNPLA2) with the lipid droplet to mediate lipolysis. Involved in the Golgi disassembly and reassembly processes during cell cycle. Involved in autophagy by playing a role in early endosome function. Plays a role in organellar compartmentalization of secretory compartments including endoplasmic reticulum (ER)-Golgi intermediate compartment (ERGIC), Golgi, trans-Golgi network (TGN) and recycling endosomes, and in biosynthetic transport of CAV1. Promotes degradation of Nef cellular targets CD4 and MHC class I antigens by facilitating their trafficking to degradative compartments. This Pongo abelii (Sumatran orangutan) protein is Coatomer subunit beta (COPB1).